Here is a 312-residue protein sequence, read N- to C-terminus: Porphobilinogen deaminase (312 aa).

Cys-243 bears the S-(dipyrrolylmethanemethyl)cysteine mark.

This sequence belongs to the HMBS family. As to quaternary structure, monomer. Dipyrromethane is required as a cofactor.

The enzyme catalyses 4 porphobilinogen + H2O = hydroxymethylbilane + 4 NH4(+). It functions in the pathway porphyrin-containing compound metabolism; protoporphyrin-IX biosynthesis; coproporphyrinogen-III from 5-aminolevulinate: step 2/4. Tetrapolymerization of the monopyrrole PBG into the hydroxymethylbilane pre-uroporphyrinogen in several discrete steps. This is Porphobilinogen deaminase from Vibrio campbellii (strain ATCC BAA-1116).